A 181-amino-acid chain; its full sequence is Protein GrpE (181 aa).

The protein belongs to the GrpE family. In terms of assembly, homodimer.

It is found in the cytoplasm. Functionally, participates actively in the response to hyperosmotic and heat shock by preventing the aggregation of stress-denatured proteins, in association with DnaK and GrpE. It is the nucleotide exchange factor for DnaK and may function as a thermosensor. Unfolded proteins bind initially to DnaJ; upon interaction with the DnaJ-bound protein, DnaK hydrolyzes its bound ATP, resulting in the formation of a stable complex. GrpE releases ADP from DnaK; ATP binding to DnaK triggers the release of the substrate protein, thus completing the reaction cycle. Several rounds of ATP-dependent interactions between DnaJ, DnaK and GrpE are required for fully efficient folding. The chain is Protein GrpE from Delftia acidovorans (strain DSM 14801 / SPH-1).